A 1053-amino-acid chain; its full sequence is Phosphoenolpyruvate carboxylase (1053 aa).

Histidine 246 is a catalytic residue. Positions 461-473 are enriched in basic and acidic residues; sequence RNTRLQQQQEKDP. Positions 461–480 are disordered; it reads RNTRLQQQQEKDPTTPLPEY. The active site involves lysine 699.

This sequence belongs to the PEPCase type 1 family. It depends on Mg(2+) as a cofactor.

The catalysed reaction is oxaloacetate + phosphate = phosphoenolpyruvate + hydrogencarbonate. Functionally, forms oxaloacetate, a four-carbon dicarboxylic acid source for the tricarboxylic acid cycle. The polypeptide is Phosphoenolpyruvate carboxylase (ppc) (Synechococcus sp. (strain ATCC 27144 / PCC 6301 / SAUG 1402/1) (Anacystis nidulans)).